The sequence spans 260 residues: Large ribosomal subunit protein uL2 (260 aa).

The segment at 1–24 (MGRVIRAQRKGAGSVFKSHTHHRK) is disordered.

This sequence belongs to the universal ribosomal protein uL2 family.

Its subcellular location is the cytoplasm. This chain is Large ribosomal subunit protein uL2 (RPL8), found in Solanum lycopersicum (Tomato).